The chain runs to 675 residues: Methionine--tRNA ligase (675 aa).

Residues 12-22 (PYANGPIHLGH) carry the 'HIGH' region motif. The Zn(2+) site is built by cysteine 143, cysteine 146, cysteine 156, and cysteine 159. The short motif at 328–332 (KMSKS) is the 'KMSKS' region element. Lysine 331 lines the ATP pocket. Residues 574–675 (DFAKVDLRIA…QGAQPGMRVK (102 aa)) enclose the tRNA-binding domain.

It belongs to the class-I aminoacyl-tRNA synthetase family. MetG type 1 subfamily. Homodimer. It depends on Zn(2+) as a cofactor.

Its subcellular location is the cytoplasm. It carries out the reaction tRNA(Met) + L-methionine + ATP = L-methionyl-tRNA(Met) + AMP + diphosphate. Functionally, is required not only for elongation of protein synthesis but also for the initiation of all mRNA translation through initiator tRNA(fMet) aminoacylation. The sequence is that of Methionine--tRNA ligase from Alkalilimnicola ehrlichii (strain ATCC BAA-1101 / DSM 17681 / MLHE-1).